A 703-amino-acid polypeptide reads, in one-letter code: Protein CASC3 (703 aa).

The tract at residues 1–462 is disordered; sequence MADRRRQRAS…APVDSSTSGL (462 aa). Positions 19–28 are enriched in low complexity; that stretch reads GASGSDSGGS. A compositionally biased stretch (gly residues) spans 29–46; sequence PLRGGGSCSGSAGGGGSG. S35 bears the Phosphoserine mark. Acidic residues-rich tracts occupy residues 74–84 and 93–108; these read ESECESEDGIE and ESAE…YSEE. Residues 95–131 adopt a coiled-coil conformation; the sequence is AEDSEGEEGEYSEEENSKVELKSEANDAVNSSTKEEK. 2 stretches are compositionally biased toward basic and acidic residues: residues 109–119 and 127–138; these read ENSKVELKSEA and TKEEKGEEKPDT. S117 bears the Phosphoserine mark. The segment at 137–283 is necessary for RNA-binding, interaction with MAGOH and localization in nucleus speckles; that stretch reads DTKSTVTGER…NGERLNKSHR (147 aa). Residues 137-283 are sufficient to form the EJC; sequence DTKSTVTGER…NGERLNKSHR (147 aa). Polar residues predominate over residues 139-157; the sequence is KSTVTGERQSGDGQESTEP. S148 is modified (phosphoserine). Basic and acidic residues predominate over residues 158 to 178; it reads VENKVGKKGPKHLDDDEDRKN. The Nuclear localization signal 1 signature appears at 204–210; sequence PKGRQRK. Composition is skewed to basic and acidic residues over residues 211-234 and 245-255; these read LWKD…KSRQ and RSAHNPDDIKP. The short motif at 254–262 is the Nuclear localization signal 2 element; sequence KPRRIRKPR. A Phosphoserine modification is found at S265. Positions 341–355 are enriched in basic and acidic residues; the sequence is ETVKHEISYRSRRLE. The residue at position 357 (T357) is a Phosphothreonine. Phosphoserine occurs at positions 363 and 373. Residues 377–703 form a necessary for localization in cytoplasmic stress granules region; it reads EEAASEPPAA…PPEVVSRGSS (327 aa). Positions 413-422 are enriched in basic and acidic residues; sequence KVGDAVKLAE. Over residues 424 to 445 the composition is skewed to pro residues; the sequence is VPPPPEGLIPAPPVPETTPTPP. The Nuclear export signal motif lies at 462–466; that stretch reads LEQDV. S477 is modified (phosphoserine). Disordered stretches follow at residues 492-538 and 633-703; these read MPNH…APPV and PSYP…RGSS. Composition is skewed to pro residues over residues 641 to 650 and 677 to 696; these read ALPPPPPPHL and KPSP…PPPE.

Belongs to the CASC3 family. Identified in the spliceosome C complex. Component of the mRNA splicing-dependent exon junction complex (EJC), which contains at least CASC3, EIF4A3, MAGOH, NXF1 and RBM8A/Y14. Identified in a complex composed of the EJC core, UPF3B and UPF2. The EJC core can also interact with UPF3A (in vitro). Forms homooligomers. Interacts with STAU in an RNA-dependent manner. Interacts with DHX34; the interaction is RNA-independent. Post-translationally, ADP-ribosylated by tankyrase TNKS and TNKS2. Poly-ADP-ribosylated protein is recognized by RNF146, followed by ubiquitination. In terms of processing, ubiquitinated by RNF146 when poly-ADP-ribosylated, leading to its degradation. As to expression, widely expressed. Overexpressed in breast cancers and metastasis, as well as in gastric cancers.

It is found in the cytoplasm. Its subcellular location is the perinuclear region. The protein resides in the nucleus. It localises to the nucleus speckle. The protein localises to the stress granule. It is found in the cytoplasmic ribonucleoprotein granule. Its subcellular location is the cell projection. The protein resides in the dendrite. Functionally, required for pre-mRNA splicing as component of the spliceosome. Core component of the splicing-dependent multiprotein exon junction complex (EJC) deposited at splice junctions on mRNAs. The EJC is a dynamic structure consisting of core proteins and several peripheral nuclear and cytoplasmic associated factors that join the complex only transiently either during EJC assembly or during subsequent mRNA metabolism. The EJC marks the position of the exon-exon junction in the mature mRNA for the gene expression machinery and the core components remain bound to spliced mRNAs throughout all stages of mRNA metabolism thereby influencing downstream processes including nuclear mRNA export, subcellular mRNA localization, translation efficiency and nonsense-mediated mRNA decay (NMD). Stimulates the ATPase and RNA-helicase activities of EIF4A3. Plays a role in the stress response by participating in cytoplasmic stress granules assembly and by favoring cell recovery following stress. Component of the dendritic ribonucleoprotein particles (RNPs) in hippocampal neurons. May play a role in mRNA transport. Binds spliced mRNA in sequence-independent manner, 20-24 nucleotides upstream of mRNA exon-exon junctions. Binds poly(G) and poly(U) RNA homomer. The sequence is that of Protein CASC3 (CASC3) from Homo sapiens (Human).